The sequence spans 118 residues: Acidic elicitin A1 (118 aa).

Residues methionine 1 to alanine 20 form the signal peptide. Intrachain disulfides connect cysteine 23–cysteine 91, cysteine 47–cysteine 76, and cysteine 71–cysteine 115.

The protein belongs to the elicitin family.

It is found in the secreted. Functionally, induces local and distal defense responses (incompatible hypersensitive reaction) in plants from the solanaceae and cruciferae families. Elicits leaf necrosis and causes the accumulation of pathogenesis-related proteins. Might interact with the lipidic molecules of the plasma membrane. The protein is Acidic elicitin A1 (B14) of Phytophthora cryptogea.